The sequence spans 805 residues: Kinesin-like protein Klp10A (805 aa).

The segment at 1 to 274 (MDMITVGQSV…FVPLLDGQAV (274 aa)) is globular. Disordered regions lie at residues 68–94 (QHAAPEPKKQATAPMNLSRNPTQSAIG) and 117–211 (IPNP…RRSH). Polar residues predominate over residues 80–94 (APMNLSRNPTQSAIG). Residues 123 to 136 (SSNSVNTNSNSNTT) are compositionally biased toward low complexity. Position 157 is a phosphoserine (serine 157). Residues 158 to 179 (QAATGQQQTRIASAVPNNTLPN) show a composition bias toward polar residues. The segment covering 180–200 (PSAAASAGPAAQGVATAATTQ) has biased composition (low complexity). Residues 205–244 (ASTRRSHALKEVERLKENREKRRARQAEMKEEKVALMNQD) adopt a coiled-coil conformation. The Kinesin motor domain occupies 278–610 (QITVCVRKRP…LRYADRVKEL (333 aa)). 368 to 375 (GQTGSGKT) contacts ATP. Threonine 630 carries the post-translational modification Phosphothreonine. A disordered region spans residues 633 to 688 (EEEEELNMVHPHSHQLHPNSHAPASQSNNQRAPASHHSGAVIHNNNNNNNKNGNAG). The segment covering 648–664 (LHPNSHAPASQSNNQRA) has biased composition (polar residues). Residues 676–688 (NNNNNNNKNGNAG) are compositionally biased toward low complexity. Phosphoserine occurs at positions 795, 797, and 800.

The protein belongs to the TRAFAC class myosin-kinesin ATPase superfamily. Kinesin family. MCAK/KIF2 subfamily. As to quaternary structure, interacts with Alms1a (via C-terminus). Expressed in male germline stem cells and spermatogonia (at protein level).

Its subcellular location is the cytoplasm. The protein resides in the cytoskeleton. The protein localises to the microtubule organizing center. It is found in the centrosome. It localises to the spindle pole. Its subcellular location is the chromosome. The protein resides in the centromere. Its function is as follows. Required during anaphase to drive sister chromatid separation to promote flux by actively depolymerizing kinetochore microtubules at their pole-associated minus ends, thereby moving chromatids through a 'poleward flux'. Involved in asymmetric cell division of sensory organ precursor (SOP) cells by playing a role in the asymmetric localization of Sara-expressing endosomes to the pIIa daughter cell but not to the pIIb cell. Klp98A targets Sara-expressing endosomes to the central spindle which is symmetrically arranged in early cell division. During late cytokinesis, central spindle asymmetry is generated by enrichment of Patronin on the pIIb side which protects microtubules from depolymerization by Klp10A while unprotected microtubules on the pIIa side are disassembled by Klp10A, leading to the asymmetric delivery of Sara-expressing endosomes to the pIIa daughter cell. This is Kinesin-like protein Klp10A from Drosophila melanogaster (Fruit fly).